Here is a 649-residue protein sequence, read N- to C-terminus: Beta-galactosidase-1-like protein 3 (649 aa).

Glutamate 203 serves as the catalytic Proton donor. Catalysis depends on glutamate 277, which acts as the Nucleophile.

It belongs to the glycosyl hydrolase 35 family.

The protein is Beta-galactosidase-1-like protein 3 (Glb1l3) of Mus musculus (Mouse).